The chain runs to 176 residues: Dual-action ribosomal maturation protein DarP (176 aa).

The segment covering Met1–Ile10 has biased composition (polar residues). The segment at Met1–Thr22 is disordered.

This sequence belongs to the DarP family.

Its subcellular location is the cytoplasm. Member of a network of 50S ribosomal subunit biogenesis factors which assembles along the 30S-50S interface, preventing incorrect 23S rRNA structures from forming. Promotes peptidyl transferase center (PTC) maturation. In Nitrosomonas eutropha (strain DSM 101675 / C91 / Nm57), this protein is Dual-action ribosomal maturation protein DarP.